Reading from the N-terminus, the 154-residue chain is Large ribosomal subunit protein uL15 (154 aa).

Positions 1–57 (MRFQDLHPQAGSRRRKRRIGRGIAAGQGASGGFGMRGQKSRSGRPTRPGFEGGQNPL) are disordered. Residues 23–35 (IAAGQGASGGFGM) show a composition bias toward gly residues.

Belongs to the universal ribosomal protein uL15 family. Part of the 50S ribosomal subunit.

Binds to the 23S rRNA. The sequence is that of Large ribosomal subunit protein uL15 from Thermosynechococcus vestitus (strain NIES-2133 / IAM M-273 / BP-1).